We begin with the raw amino-acid sequence, 243 residues long: uncharacterized protein (243 aa).

C120 and C157 together coordinate [4Fe-4S] cluster.

In terms of assembly, homodimer. Requires [4Fe-4S] cluster as cofactor.

This is an uncharacterized protein from Methanocaldococcus jannaschii (strain ATCC 43067 / DSM 2661 / JAL-1 / JCM 10045 / NBRC 100440) (Methanococcus jannaschii).